The chain runs to 732 residues: 1,4-alpha-glucan branching enzyme GlgB 1 (732 aa).

Aspartate 411 serves as the catalytic Nucleophile. Glutamate 464 serves as the catalytic Proton donor.

This sequence belongs to the glycosyl hydrolase 13 family. GlgB subfamily. Monomer.

It carries out the reaction Transfers a segment of a (1-&gt;4)-alpha-D-glucan chain to a primary hydroxy group in a similar glucan chain.. It participates in glycan biosynthesis; glycogen biosynthesis. Catalyzes the formation of the alpha-1,6-glucosidic linkages in glycogen by scission of a 1,4-alpha-linked oligosaccharide from growing alpha-1,4-glucan chains and the subsequent attachment of the oligosaccharide to the alpha-1,6 position. The polypeptide is 1,4-alpha-glucan branching enzyme GlgB 1 (Xanthomonas oryzae pv. oryzae (strain KACC10331 / KXO85)).